Reading from the N-terminus, the 525-residue chain is Probable protein kinase UbiB (525 aa).

The Protein kinase domain occupies 118–500; it reads DFERVPVASA…QKRTNRLLQG (383 aa). ATP-binding positions include 124–132 and K150; that span reads VASASIAQV. D285 functions as the Proton acceptor in the catalytic mechanism. A helical transmembrane segment spans residues 501 to 521; the sequence is LLLFGVAVGVGAALARVFLAL.

It belongs to the ABC1 family. UbiB subfamily.

The protein resides in the cell inner membrane. It functions in the pathway cofactor biosynthesis; ubiquinone biosynthesis [regulation]. Is probably a protein kinase regulator of UbiI activity which is involved in aerobic coenzyme Q (ubiquinone) biosynthesis. The protein is Probable protein kinase UbiB of Paraburkholderia xenovorans (strain LB400).